Here is a 209-residue protein sequence, read N- to C-terminus: Isopentenyl-diphosphate Delta-isomerase (209 aa).

2 residues coordinate Mn(2+): His31 and His38. A Nudix hydrolase domain is found at 36–171; sequence PLHLAFSVYI…RLLVSPWCRA (136 aa). Cys73 is an active-site residue. Position 73 (Cys73) interacts with Mg(2+). His75 is a Mn(2+) binding site. Glu93 is a Mg(2+) binding site. Glu120 and Glu122 together coordinate Mn(2+). Glu122 is a catalytic residue.

The protein belongs to the IPP isomerase type 1 family. Mg(2+) is required as a cofactor. Mn(2+) serves as cofactor.

The protein resides in the cytoplasm. It catalyses the reaction isopentenyl diphosphate = dimethylallyl diphosphate. It functions in the pathway isoprenoid biosynthesis; dimethylallyl diphosphate biosynthesis; dimethylallyl diphosphate from isopentenyl diphosphate: step 1/1. In terms of biological role, catalyzes the 1,3-allylic rearrangement of the homoallylic substrate isopentenyl (IPP) to its highly electrophilic allylic isomer, dimethylallyl diphosphate (DMAPP). The protein is Isopentenyl-diphosphate Delta-isomerase of Rhizobium rhizogenes (Agrobacterium rhizogenes).